We begin with the raw amino-acid sequence, 317 residues long: MTPALKSTFVLAHRHLLGIEGLSAADITGLLDLSEEYVELNRQVDKKRASLRGRTQVNLFFEASTRTQSSFEIAGKRLGADVMNMSVSSSSMRKGETLMDTAVTLNAMHPDILVVRHHASGAVELLARKVDGSVINAGDGAHEHPTQALLDALTIRRNKGRLEGLVVAICGDVMHSRVARSNILLLNTMGARVRVVAPSTLLPRGIERMGVEVARDMREGLDGADIVMMLRLQRERMNGSFVPSSQEYFHYFGLDQKKLAYAKPDALVMHPGPMNRGVEIDSIVADGAQSVIREQVEMGVAVRMAVLEALARNLPNA.

Carbamoyl phosphate-binding residues include Arg66 and Thr67. Lys94 is a binding site for L-aspartate. Residues Arg116, His144, and Gln147 each coordinate carbamoyl phosphate. L-aspartate is bound by residues Arg177 and Arg231. Residues Gly272 and Pro273 each contribute to the carbamoyl phosphate site.

Belongs to the aspartate/ornithine carbamoyltransferase superfamily. ATCase family. Heterododecamer (2C3:3R2) of six catalytic PyrB chains organized as two trimers (C3), and six regulatory PyrI chains organized as three dimers (R2).

It carries out the reaction carbamoyl phosphate + L-aspartate = N-carbamoyl-L-aspartate + phosphate + H(+). It participates in pyrimidine metabolism; UMP biosynthesis via de novo pathway; (S)-dihydroorotate from bicarbonate: step 2/3. Its function is as follows. Catalyzes the condensation of carbamoyl phosphate and aspartate to form carbamoyl aspartate and inorganic phosphate, the committed step in the de novo pyrimidine nucleotide biosynthesis pathway. The protein is Aspartate carbamoyltransferase catalytic subunit of Rhodopseudomonas palustris (strain BisB5).